Consider the following 236-residue polypeptide: 2,3,4,5-tetrahydropyridine-2,6-dicarboxylate N-acetyltransferase (236 aa).

The protein belongs to the transferase hexapeptide repeat family. DapH subfamily.

It carries out the reaction (S)-2,3,4,5-tetrahydrodipicolinate + acetyl-CoA + H2O = L-2-acetamido-6-oxoheptanedioate + CoA. Its pathway is amino-acid biosynthesis; L-lysine biosynthesis via DAP pathway; LL-2,6-diaminopimelate from (S)-tetrahydrodipicolinate (acetylase route): step 1/3. Catalyzes the transfer of an acetyl group from acetyl-CoA to tetrahydrodipicolinate. The polypeptide is 2,3,4,5-tetrahydropyridine-2,6-dicarboxylate N-acetyltransferase (Thermotoga maritima (strain ATCC 43589 / DSM 3109 / JCM 10099 / NBRC 100826 / MSB8)).